Here is a 60-residue protein sequence, read N- to C-terminus: Large ribosomal subunit protein bL32 (60 aa).

Basic residues predominate over residues 1–23 (MACPKKKTSNAKRDQRRAHWRKQ). Positions 1–60 (MACPKKKTSNAKRDQRRAHWRKQAAREAQKALSLGKSVLSGRSNSFVYPTKEEEEGEDEE) are disordered.

It belongs to the bacterial ribosomal protein bL32 family.

The polypeptide is Large ribosomal subunit protein bL32 (Microcystis aeruginosa (strain NIES-843 / IAM M-2473)).